The sequence spans 204 residues: Protein GrpE (204 aa).

Over residues 1–12 (MSNEEQAQKDDA) the composition is skewed to basic and acidic residues. Positions 1–32 (MSNEEQAQKDDAQPVNEAAIDATAEQADAEVE) are disordered. Positions 17 to 26 (EAAIDATAEQ) are enriched in low complexity.

It belongs to the GrpE family. Homodimer.

The protein resides in the cytoplasm. Its function is as follows. Participates actively in the response to hyperosmotic and heat shock by preventing the aggregation of stress-denatured proteins, in association with DnaK and GrpE. It is the nucleotide exchange factor for DnaK and may function as a thermosensor. Unfolded proteins bind initially to DnaJ; upon interaction with the DnaJ-bound protein, DnaK hydrolyzes its bound ATP, resulting in the formation of a stable complex. GrpE releases ADP from DnaK; ATP binding to DnaK triggers the release of the substrate protein, thus completing the reaction cycle. Several rounds of ATP-dependent interactions between DnaJ, DnaK and GrpE are required for fully efficient folding. The protein is Protein GrpE of Pseudoalteromonas atlantica (strain T6c / ATCC BAA-1087).